We begin with the raw amino-acid sequence, 103 residues long: Large ribosomal subunit protein bL21 (103 aa).

It belongs to the bacterial ribosomal protein bL21 family. As to quaternary structure, part of the 50S ribosomal subunit. Contacts protein L20.

This protein binds to 23S rRNA in the presence of protein L20. The protein is Large ribosomal subunit protein bL21 of Ralstonia pickettii (strain 12J).